Here is a 312-residue protein sequence, read N- to C-terminus: MNPTFQDIILTLQRYWGERGCALLQPYDMEVGAGTSHTATFLRALGPEPWKAAYVQPSRRPKDGRYGENPNRLQHYYQFQVVLKPAPADILELYLGSLEALGFDLRKNDVRFVEDDWENPTLGAWGLGWEVWLNGMEVTQFTYFQQVGGIDCKPITGEITYGLERLAMYLQGVESVFDLRWTDGLTYRDVYHQNEVEQSAYNFEHSDVGFLLTAFSAHEKKAQELMVAQLALPAYEQVLKAAHTFNLLDARGAISVTERAAYIGRIRNLARSVAKSYLDSRARLGFPMAPRAWADEVLANIEKQTQKKAAAA.

It belongs to the class-II aminoacyl-tRNA synthetase family. In terms of assembly, tetramer of two alpha and two beta subunits.

The protein localises to the cytoplasm. It catalyses the reaction tRNA(Gly) + glycine + ATP = glycyl-tRNA(Gly) + AMP + diphosphate. This is Glycine--tRNA ligase alpha subunit from Thiobacillus denitrificans (strain ATCC 25259 / T1).